A 168-amino-acid polypeptide reads, in one-letter code: Cell division inhibitor SulA (168 aa).

The tract at residues 106–112 (ALLTGNY) is ftsZ binding. A lon protease binding region spans residues 161–168 (KIHSYLYH).

Belongs to the SulA family. Interacts with FtsZ. Is rapidly cleaved and degraded by the Lon protease once DNA damage is repaired.

Functionally, component of the SOS system and an inhibitor of cell division. Accumulation of SulA causes rapid cessation of cell division and the appearance of long, non-septate filaments. In the presence of GTP, binds a polymerization-competent form of FtsZ in a 1:1 ratio, thus inhibiting FtsZ polymerization and therefore preventing it from participating in the assembly of the Z ring. This mechanism prevents the premature segregation of damaged DNA to daughter cells during cell division. The polypeptide is Cell division inhibitor SulA (Yersinia pseudotuberculosis serotype O:1b (strain IP 31758)).